The chain runs to 298 residues: Protease HtpX homolog (298 aa).

A run of 2 helical transmembrane segments spans residues 15 to 35 (YVMI…GYVF) and 39 to 59 (AMAG…MMIA). His143 lines the Zn(2+) pocket. Glu144 is a catalytic residue. His147 is a Zn(2+) binding site. The next 2 helical transmembrane spans lie at 158 to 178 (IALA…RSFW) and 197 to 217 (IVMM…TTIA). Glu226 is a binding site for Zn(2+).

It belongs to the peptidase M48B family. The cofactor is Zn(2+).

The protein localises to the cell membrane. The chain is Protease HtpX homolog from Pediococcus pentosaceus (strain ATCC 25745 / CCUG 21536 / LMG 10740 / 183-1w).